The sequence spans 99 residues: Beta-defensin 127 (99 aa).

The signal sequence occupies residues 1–20; sequence MGLFMIIAILLFQKPTVTEQ. Disulfide bonds link cysteine 24/cysteine 53, cysteine 33/cysteine 47, and cysteine 37/cysteine 54. Residues 66 to 99 constitute a propeptide that is removed on maturation; the sequence is ITKPPRPKPATLALTLQDYVTIIENFPSLKTQST.

The protein belongs to the beta-defensin family.

It localises to the secreted. In terms of biological role, has antibacterial activity. This Homo sapiens (Human) protein is Beta-defensin 127 (DEFB127).